The sequence spans 373 residues: T-protein (373 aa).

The Chorismate mutase domain maps to 1-90; the sequence is MVAELTALRD…ESYSSENDKG (90 aa). The 263-residue stretch at 99 to 361 folds into the Prephenate/arogenate dehydrogenase domain; the sequence is RPVVIVGGGG…DYAQRFQSES (263 aa).

The protein in the C-terminal section; belongs to the prephenate/arogenate dehydrogenase family.

Its subcellular location is the cytoplasm. It carries out the reaction chorismate = prephenate. It catalyses the reaction prephenate + NAD(+) = 3-(4-hydroxyphenyl)pyruvate + CO2 + NADH. It participates in amino-acid biosynthesis; L-tyrosine biosynthesis; (4-hydroxyphenyl)pyruvate from prephenate (NAD(+) route): step 1/1. It functions in the pathway metabolic intermediate biosynthesis; prephenate biosynthesis; prephenate from chorismate: step 1/1. The chain is T-protein (tyrA) from Escherichia coli (strain K12).